The sequence spans 258 residues: Phosphate import ATP-binding protein PstB 1 (258 aa).

The region spanning 5-247 (LDLTDVNIYY…EKIFSNPNQK (243 aa)) is the ABC transporter domain. ATP is bound at residue 37–44 (GPSGCGKT).

Belongs to the ABC transporter superfamily. Phosphate importer (TC 3.A.1.7) family. The complex is composed of two ATP-binding proteins (PstB), two transmembrane proteins (PstC and PstA) and a solute-binding protein (PstS).

The protein resides in the cell membrane. The enzyme catalyses phosphate(out) + ATP + H2O = ADP + 2 phosphate(in) + H(+). Part of the ABC transporter complex PstSACB involved in phosphate import. Responsible for energy coupling to the transport system. The sequence is that of Phosphate import ATP-binding protein PstB 1 from Mycobacterium bovis (strain ATCC BAA-935 / AF2122/97).